The chain runs to 445 residues: Putative diacyglycerol O-acyltransferase Rv2285 (445 aa).

Residue histidine 135 is the Proton acceptor of the active site.

Belongs to the long-chain O-acyltransferase family.

The catalysed reaction is an acyl-CoA + a 1,2-diacyl-sn-glycerol = a triacyl-sn-glycerol + CoA. The enzyme catalyses di-(9Z)-octadecenoylglycerol + (9Z)-octadecenoyl-CoA = 1,2,3-tri-(9Z-octadecenoyl)-glycerol + CoA. It functions in the pathway glycerolipid metabolism; triacylglycerol biosynthesis. Functionally, catalyzes the terminal and only committed step in triacylglycerol synthesis by using diacylglycerol and fatty acyl CoA as substrates. Required for storage lipid synthesis. Its function is as follows. Upon expression in E.coli functions weakly as a triacylglycerol synthase, making triacylglycerol (TG) from diolein and long-chain fatty acyl-CoA. Has very weak wax synthase activity, incorporating palmityl alcohol into wax esters in the presence of palmitoyl-CoA. The protein is Putative diacyglycerol O-acyltransferase Rv2285 of Mycobacterium tuberculosis (strain ATCC 25618 / H37Rv).